Consider the following 409-residue polypeptide: Translation initiation factor 2 subunit gamma (409 aa).

Residues 6 to 203 (QPEVNIGLVG…AVQSEIPTPE (198 aa)) form the tr-type G domain. Residues 15 to 22 (GHVDHGKT) form a G1 region. Residues Asp-18, Thr-22, Gly-43, and Ser-45 each contribute to the Mg(2+) site. 18–23 (DHGKTT) contributes to the GTP binding site. The segment at 43–47 (GISIR) is G2. Positions 90–93 (DAPG) are G3. GTP-binding positions include 146-149 (NKVD) and 181-183 (SAG). Residues 146–149 (NKVD) form a G4 region. Positions 181 to 183 (SAG) are G5.

The protein belongs to the TRAFAC class translation factor GTPase superfamily. Classic translation factor GTPase family. EIF2G subfamily. Heterotrimer composed of an alpha, a beta and a gamma chain. It depends on Mg(2+) as a cofactor.

The enzyme catalyses GTP + H2O = GDP + phosphate + H(+). Functionally, eIF-2 functions in the early steps of protein synthesis by forming a ternary complex with GTP and initiator tRNA. This chain is Translation initiation factor 2 subunit gamma, found in Haloarcula marismortui (strain ATCC 43049 / DSM 3752 / JCM 8966 / VKM B-1809) (Halobacterium marismortui).